The primary structure comprises 251 residues: Hydroxyacylglutathione hydrolase (251 aa).

H59, H61, D63, H64, H118, D141, and H179 together coordinate Zn(2+).

It belongs to the metallo-beta-lactamase superfamily. Glyoxalase II family. In terms of assembly, monomer. Zn(2+) serves as cofactor.

The catalysed reaction is an S-(2-hydroxyacyl)glutathione + H2O = a 2-hydroxy carboxylate + glutathione + H(+). It participates in secondary metabolite metabolism; methylglyoxal degradation; (R)-lactate from methylglyoxal: step 2/2. Thiolesterase that catalyzes the hydrolysis of S-D-lactoyl-glutathione to form glutathione and D-lactic acid. In Prochlorococcus marinus (strain NATL2A), this protein is Hydroxyacylglutathione hydrolase.